A 114-amino-acid chain; its full sequence is Ribonuclease P protein component (114 aa).

The protein belongs to the RnpA family. As to quaternary structure, consists of a catalytic RNA component (M1 or rnpB) and a protein subunit.

It catalyses the reaction Endonucleolytic cleavage of RNA, removing 5'-extranucleotides from tRNA precursor.. Functionally, RNaseP catalyzes the removal of the 5'-leader sequence from pre-tRNA to produce the mature 5'-terminus. It can also cleave other RNA substrates such as 4.5S RNA. The protein component plays an auxiliary but essential role in vivo by binding to the 5'-leader sequence and broadening the substrate specificity of the ribozyme. This Lactiplantibacillus plantarum (strain ATCC BAA-793 / NCIMB 8826 / WCFS1) (Lactobacillus plantarum) protein is Ribonuclease P protein component.